A 1463-amino-acid polypeptide reads, in one-letter code: Probable ATP-dependent RNA helicase spindle-E (1463 aa).

The Helicase ATP-binding domain occupies 131–296 (LKAIRENPVV…FKIPGPNSLF (166 aa)). Residue 144 to 151 (GMTGCGKT) coordinates ATP. Residues 243-246 (DEVH) carry the DEAH box motif. The 184-residue stretch at 348–531 (VCDRFIDEFE…NVVLKTKLLD (184 aa)) folds into the Helicase C-terminal domain. One can recognise a Tudor domain in the interval 951-1016 (AFKQRDIVAA…QLRGTPLDMF (66 aa)).

Belongs to the DEAD box helicase family. DEAH subfamily.

It localises to the cytoplasm. The enzyme catalyses ATP + H2O = ADP + phosphate + H(+). In terms of biological role, probable ATP-binding RNA helicase which plays a central role during gametogenesis by repressing transposable elements and preventing their mobilization, which is essential for the germline integrity. Acts via the piRNA metabolic process, which mediates the repression of transposable elements during meiosis by forming complexes composed of piRNAs and Piwi proteins and govern the methylation and subsequent repression of transposons. The protein is Probable ATP-dependent RNA helicase spindle-E (spn-E) of Anopheles gambiae (African malaria mosquito).